The primary structure comprises 152 residues: Deoxyuridine 5'-triphosphate nucleotidohydrolase (152 aa).

Substrate is bound by residues 62-64 (RSG), Asn-75, and 79-81 (TVD).

It belongs to the dUTPase family. Mg(2+) serves as cofactor.

The enzyme catalyses dUTP + H2O = dUMP + diphosphate + H(+). The protein operates within pyrimidine metabolism; dUMP biosynthesis; dUMP from dCTP (dUTP route): step 2/2. Functionally, this enzyme is involved in nucleotide metabolism: it produces dUMP, the immediate precursor of thymidine nucleotides and it decreases the intracellular concentration of dUTP so that uracil cannot be incorporated into DNA. In Leifsonia xyli subsp. xyli (strain CTCB07), this protein is Deoxyuridine 5'-triphosphate nucleotidohydrolase.